Here is a 154-residue protein sequence, read N- to C-terminus: Snaclec lebecin subunit beta (154 aa).

Residues 1–23 (MGRIIFVSFGLLVVFLSLSGTGA) form the signal peptide. Intrachain disulfides connect Cys25-Cys36, Cys53-Cys150, and Cys125-Cys142. The C-type lectin domain maps to 32–151 (DEEHCYYVFF…CGDDYPFVCK (120 aa)). Asn139 carries N-linked (GlcNAc...) asparagine glycosylation.

Heterodimer with the alpha subunit (AC W5XDM0); disulfide-linked. In terms of tissue distribution, expressed by the venom gland.

The protein localises to the secreted. Functionally, inhibits human breast cancer cells (MDA-MB231) migration and proliferation, as well as their adhesion to fibrinogen and fibronectin. This inhibition may be due to the binding to receptors of the integrin family, probably alpha-v/beta-3 (ITGAV/ITGB3) (40% inhibition of cell adhesion) and alpha-5/beta-1 (ITGA5/ITGB1) (by comparison with lebectin). This chain is Snaclec lebecin subunit beta, found in Macrovipera lebetinus (Levantine viper).